The sequence spans 391 residues: GTPase Obg (391 aa).

Positions 1 to 159 (MKFIDEALIR…RDLLLELMLL (159 aa)) constitute an Obg domain. An OBG-type G domain is found at 160–333 (ADVGMLGLPN…LTRDIMDFIE (174 aa)). GTP is bound by residues 166-173 (GLPNAGKS), 191-195 (FTTLV), 213-216 (DIPG), 283-286 (NKID), and 314-316 (SAA). Residues serine 173 and threonine 193 each contribute to the Mg(2+) site.

Belongs to the TRAFAC class OBG-HflX-like GTPase superfamily. OBG GTPase family. As to quaternary structure, monomer. The cofactor is Mg(2+).

The protein resides in the cytoplasm. Its function is as follows. An essential GTPase which binds GTP, GDP and possibly (p)ppGpp with moderate affinity, with high nucleotide exchange rates and a fairly low GTP hydrolysis rate. Plays a role in control of the cell cycle, stress response, ribosome biogenesis and in those bacteria that undergo differentiation, in morphogenesis control. In Haemophilus ducreyi (strain 35000HP / ATCC 700724), this protein is GTPase Obg.